The sequence spans 226 residues: UPF0319 protein YpAngola_A3206 (226 aa).

The first 20 residues, 1–20 (MKLGLVAGMLAVCFSFSSVA), serve as a signal peptide directing secretion.

It belongs to the UPF0319 family.

This chain is UPF0319 protein YpAngola_A3206, found in Yersinia pestis bv. Antiqua (strain Angola).